The following is a 179-amino-acid chain: Peptide deformylase (179 aa).

Positions 102 and 144 each coordinate Fe cation. Glu145 is a catalytic residue. Residue His148 coordinates Fe cation.

The protein belongs to the polypeptide deformylase family. The cofactor is Fe(2+).

It catalyses the reaction N-terminal N-formyl-L-methionyl-[peptide] + H2O = N-terminal L-methionyl-[peptide] + formate. Removes the formyl group from the N-terminal Met of newly synthesized proteins. Requires at least a dipeptide for an efficient rate of reaction. N-terminal L-methionine is a prerequisite for activity but the enzyme has broad specificity at other positions. The chain is Peptide deformylase from Wolbachia sp. subsp. Brugia malayi (strain TRS).